The chain runs to 142 residues: Organic hydroperoxide resistance protein-like 2 (142 aa).

The protein belongs to the OsmC/Ohr family.

This Staphylococcus saprophyticus subsp. saprophyticus (strain ATCC 15305 / DSM 20229 / NCIMB 8711 / NCTC 7292 / S-41) protein is Organic hydroperoxide resistance protein-like 2.